Reading from the N-terminus, the 263-residue chain is Phosphatidylglycerol--prolipoprotein diacylglyceryl transferase (263 aa).

The next 4 membrane-spanning stretches (helical) occupy residues 6-26, 50-70, 85-105, and 112-132; these read VIFS…VLGI, LLTA…VLIY, TWEG…AVII, and IPIF…LLLG. Arg133 serves as a coordination point for a 1,2-diacyl-sn-glycero-3-phospho-(1'-sn-glycerol). 3 helical membrane-spanning segments follow: residues 169 to 189, 197 to 217, and 233 to 253; these read LYEA…LFYL, GATT…VEFF, and MGQL…LGAL.

This sequence belongs to the Lgt family.

It localises to the cell membrane. It carries out the reaction L-cysteinyl-[prolipoprotein] + a 1,2-diacyl-sn-glycero-3-phospho-(1'-sn-glycerol) = an S-1,2-diacyl-sn-glyceryl-L-cysteinyl-[prolipoprotein] + sn-glycerol 1-phosphate + H(+). The protein operates within protein modification; lipoprotein biosynthesis (diacylglyceryl transfer). In terms of biological role, catalyzes the transfer of the diacylglyceryl group from phosphatidylglycerol to the sulfhydryl group of the N-terminal cysteine of a prolipoprotein, the first step in the formation of mature lipoproteins. The polypeptide is Phosphatidylglycerol--prolipoprotein diacylglyceryl transferase (Wolbachia pipientis subsp. Culex pipiens (strain wPip)).